The chain runs to 443 residues: Acyl transferase 10 (443 aa).

Residues His182 and Asp386 each act as proton acceptor in the active site.

It belongs to the plant acyltransferase family.

In terms of biological role, involved in the incorporation of ferulate into the cell wall. May act as arabinoxylan feruloyl transferase. May function as p-coumaroyl-CoA transferase involved in glucuronoarabinoxylan modification. This chain is Acyl transferase 10, found in Oryza sativa subsp. japonica (Rice).